The sequence spans 411 residues: MGILNDDAVLIEPGKISGDPTVVTVNCPDESGLGSTLCRIILEFGLSITRADFSTDGRWCYIVFWVTPDISSPKIDWDSLKNRLLSACPSCLGSFYFCLQSNVSKPPSLYLLKFFCRDRKGLLHDVTKVLTELEFTIQRVKVMTTPDGRVLDMFFITDAMDLLHTKQRQTKTCDHLTAVLGEHGVSCELELAGPELESVQRFSSLPPLAADELFGPDGFDISGSSSNKAVLTVDNQLSPAHTLLQIRCVDQKGLFYDILRTSKDCDVHIAYGRFSSKVKGYRNLELFVRGTDGNKIMDPKHQANFCARLKEEMVCPLRVIIVNRGPDTELLVANPVELSGKGRPRVFYDVTLALKSLGICIFSAEIGRHSTLDRQWEVYRFLLDESREFPLASLRARNQVVDRVTKTLMGW.

ACT domains lie at V22–K105, L111–P194, and L243–V322.

Its function is as follows. May bind amino acids. The sequence is that of ACT domain-containing protein ACR9 from Arabidopsis thaliana (Mouse-ear cress).